Here is a 474-residue protein sequence, read N- to C-terminus: Mitochondrial import inner membrane translocase subunit TIM44-1 (474 aa).

A mitochondrion-targeting transit peptide spans 1 to 54 (MAIRKIIRDLLITKQPLLRQLFHQRVLRANARSEFLPAIGYTSHRRFSVFTEFS). Positions 68-88 (ERTVKELKERTEEFKGVTEDL) form a coiled coil. Over residues 132 to 143 (VKESFKLGKEEN) the composition is skewed to basic and acidic residues. The disordered stretch occupies residues 132–165 (VKESFKLGKEENAESASSSGTRASQGEKQQSGST). A compositionally biased stretch (polar residues) spans 145–165 (ESASSSGTRASQGEKQQSGST).

Belongs to the Tim44 family. As to quaternary structure, probable component of the PAM complex at least composed of a mitochondrial HSP70 protein, TIMM44 and TIMM14. The complex interacts with the TIMM23 component of the TIM17:23 complex. Expressed in roots, flowers, young cotyledons and leaves.

The protein localises to the mitochondrion inner membrane. Its function is as follows. Essential component of the PAM complex, a complex required for the translocation of transit peptide-containing proteins from the inner membrane into the mitochondrial matrix in an ATP-dependent manner. Recruits mitochondrial HSP70 to drive protein translocation into the matrix using ATP as an energy source. This chain is Mitochondrial import inner membrane translocase subunit TIM44-1 (TIM44-1), found in Arabidopsis thaliana (Mouse-ear cress).